A 924-amino-acid polypeptide reads, in one-letter code: Translation initiation factor IF-2 (924 aa).

The disordered stretch occupies residues 118 to 325; sequence PSTAHREELA…QAPVVGGVRL (208 aa). 2 stretches are compositionally biased toward pro residues: residues 150–173 and 192–201; these read APHP…PGGR and IPRPPAPRPS. The span at 202-212 shows a compositional bias: low complexity; that stretch reads ASPSSMSPRPG. Over residues 229 to 295 the composition is skewed to gly residues; the sequence is RPGGGRPGAP…GAAGAFGRPG (67 aa). Basic residues predominate over residues 299–308; sequence RRGRKSKRQK. Positions 420 to 591 constitute a tr-type G domain; that stretch reads VRPPVVTVMG…AVLLTADAAL (172 aa). The G1 stretch occupies residues 429–436; sequence GHVDHGKT. 429–436 provides a ligand contact to GTP; the sequence is GHVDHGKT. The tract at residues 454–458 is G2; that stretch reads GITQH. The interval 479-482 is G3; sequence DTPG. GTP is bound by residues 479–483 and 533–536; these read DTPGH and NKID. The interval 533-536 is G4; sequence NKID. The interval 569-571 is G5; it reads SAK.

The protein belongs to the TRAFAC class translation factor GTPase superfamily. Classic translation factor GTPase family. IF-2 subfamily.

It localises to the cytoplasm. One of the essential components for the initiation of protein synthesis. Protects formylmethionyl-tRNA from spontaneous hydrolysis and promotes its binding to the 30S ribosomal subunits. Also involved in the hydrolysis of GTP during the formation of the 70S ribosomal complex. The chain is Translation initiation factor IF-2 from Mycobacterium leprae (strain Br4923).